Reading from the N-terminus, the 278-residue chain is Large ribosomal subunit protein uL2 (278 aa).

The disordered stretch occupies residues glycine 222–lysine 278.

It belongs to the universal ribosomal protein uL2 family. As to quaternary structure, part of the 50S ribosomal subunit. Forms a bridge to the 30S subunit in the 70S ribosome.

Functionally, one of the primary rRNA binding proteins. Required for association of the 30S and 50S subunits to form the 70S ribosome, for tRNA binding and peptide bond formation. It has been suggested to have peptidyltransferase activity; this is somewhat controversial. Makes several contacts with the 16S rRNA in the 70S ribosome. The sequence is that of Large ribosomal subunit protein uL2 from Afipia carboxidovorans (strain ATCC 49405 / DSM 1227 / KCTC 32145 / OM5) (Oligotropha carboxidovorans).